Reading from the N-terminus, the 75-residue chain is Conotoxin TsMEKL-011 (75 aa).

Positions 1–19 (MEKLTILLLVAAVLMSTQA) are cleaved as a signal peptide. Positions 20–45 (LIQRGGAKRRKVNFFSIREPGAEDWR) are excised as a propeptide. Cystine bridges form between Cys49/Cys63, Cys56/Cys67, and Cys62/Cys71.

This sequence belongs to the conotoxin O2 superfamily. As to expression, expressed by the venom duct.

It localises to the secreted. This is Conotoxin TsMEKL-011 from Conus tessulatus (Tessellate cone).